The chain runs to 307 residues: UDP-3-O-acyl-N-acetylglucosamine deacetylase (307 aa).

Residues His-78, His-237, and Asp-241 each contribute to the Zn(2+) site. Residue His-264 is the Proton donor of the active site.

It belongs to the LpxC family. Zn(2+) is required as a cofactor.

It catalyses the reaction a UDP-3-O-[(3R)-3-hydroxyacyl]-N-acetyl-alpha-D-glucosamine + H2O = a UDP-3-O-[(3R)-3-hydroxyacyl]-alpha-D-glucosamine + acetate. The protein operates within glycolipid biosynthesis; lipid IV(A) biosynthesis; lipid IV(A) from (3R)-3-hydroxytetradecanoyl-[acyl-carrier-protein] and UDP-N-acetyl-alpha-D-glucosamine: step 2/6. Its function is as follows. Catalyzes the hydrolysis of UDP-3-O-myristoyl-N-acetylglucosamine to form UDP-3-O-myristoylglucosamine and acetate, the committed step in lipid A biosynthesis. This chain is UDP-3-O-acyl-N-acetylglucosamine deacetylase, found in Azoarcus sp. (strain BH72).